We begin with the raw amino-acid sequence, 1342 residues long: DNA-directed RNA polymerase subunit beta (1342 aa).

The protein belongs to the RNA polymerase beta chain family. As to quaternary structure, the RNAP catalytic core consists of 2 alpha, 1 beta, 1 beta' and 1 omega subunit. When a sigma factor is associated with the core the holoenzyme is formed, which can initiate transcription.

It carries out the reaction RNA(n) + a ribonucleoside 5'-triphosphate = RNA(n+1) + diphosphate. Its function is as follows. DNA-dependent RNA polymerase catalyzes the transcription of DNA into RNA using the four ribonucleoside triphosphates as substrates. In Sodalis glossinidius (strain morsitans), this protein is DNA-directed RNA polymerase subunit beta.